Reading from the N-terminus, the 884-residue chain is Chondroitin sulfate synthase 3 (884 aa).

The Cytoplasmic segment spans residues 1 to 7 (MAVRSRR). Residues 8–28 (PWVSVALGLVLGFTAASWLIA) form a helical; Signal-anchor for type II membrane protein membrane-spanning segment. At 29–884 (PRVAELSEKR…LGVRDNRTLS (856 aa)) the chain is on the lumenal side. A disordered region spans residues 47–164 (YYGRSATGPR…NGSGDGGAAV (118 aa)). Composition is skewed to low complexity over residues 60–69 (QQLLPQPQSR) and 84–96 (PGPQ…PGGP). N-linked (GlcNAc...) asparagine glycosylation is found at Asn-155 and Asn-281. Positions 437–456 (SNSEVSKEDQQLGRTPSFNH) are disordered. A glycan (N-linked (GlcNAc...) asparagine) is linked at Asn-712. Residues Asp-722 and His-836 each contribute to the a divalent metal cation site. Asn-880 carries an N-linked (GlcNAc...) asparagine glycan.

It belongs to the chondroitin N-acetylgalactosaminyltransferase family. Requires Co(2+) as cofactor. The cofactor is Mn(2+). It depends on Cd(2+) as a cofactor.

The protein localises to the golgi apparatus. The protein resides in the golgi stack membrane. It catalyses the reaction 3-O-(beta-D-GlcA-(1-&gt;3)-beta-D-GalNAc-(1-&gt;4)-beta-D-GlcA-(1-&gt;3)-beta-D-Gal-(1-&gt;3)-beta-D-Gal-(1-&gt;4)-beta-D-Xyl)-L-seryl-[protein] + UDP-N-acetyl-alpha-D-galactosamine = 3-O-(beta-D-GalNAc-(1-&gt;4)-beta-D-GlcA-(1-&gt;3)-beta-D-GalNAc-(1-&gt;4)-beta-D-GlcA-(1-&gt;3)-beta-D-Gal-(1-&gt;3)-beta-D-Gal-(1-&gt;4)-beta-D-Xyl)-L-seryl-[protein] + UDP + H(+). The catalysed reaction is 3-O-{beta-D-GlcA-(1-&gt;3)-[beta-D-GalNAc-(1-&gt;4)-beta-D-GlcA-(1-&gt;3)](n)-beta-D-GalNAc-(1-&gt;4)-beta-D-GlcA-(1-&gt;3)-beta-D-Gal-(1-&gt;3)-beta-D-Gal-(1-&gt;4)-beta-D-Xyl}-L-seryl-[protein] + UDP-N-acetyl-alpha-D-galactosamine = 3-O-{[beta-D-GalNAc-(1-&gt;4)-beta-D-GlcA-(1-&gt;3)](n+1)-beta-D-GalNAc-(1-&gt;4)-beta-D-GlcA-(1-&gt;3)-beta-D-Gal-(1-&gt;3)-beta-D-Gal-(1-&gt;4)-beta-D-Xyl}-L-seryl-[protein] + UDP + H(+). The enzyme catalyses 3-O-(beta-D-GalNAc-(1-&gt;4)-beta-D-GlcA-(1-&gt;3)-beta-D-Gal-(1-&gt;3)-beta-D-Gal-(1-&gt;4)-beta-D-Xyl)-L-seryl-[protein] + UDP-alpha-D-glucuronate = 3-O-(beta-D-GlcA-(1-&gt;3)-beta-D-GalNAc-(1-&gt;4)-beta-D-GlcA-(1-&gt;3)-beta-D-Gal-(1-&gt;3)-beta-D-Gal-(1-&gt;4)-beta-D-Xyl)-L-seryl-[protein] + UDP + H(+). It carries out the reaction 3-O-{[beta-D-GalNAc-(1-&gt;4)-beta-D-GlcA-(1-&gt;3)](n)-beta-D-GalNAc-(1-&gt;4)-beta-D-GlcA-(1-&gt;3)-beta-D-Gal-(1-&gt;3)-beta-D-Gal-(1-&gt;4)-beta-D-Xyl}-L-seryl-[protein] + UDP-alpha-D-glucuronate = 3-O-{beta-D-GlcA-(1-&gt;3)-[beta-D-GalNAc-(1-&gt;4)-beta-D-GlcA-(1-&gt;3)](n)-beta-D-GalNAc-(1-&gt;4)-beta-D-GlcA-(1-&gt;3)-beta-D-Gal-(1-&gt;3)-beta-D-Gal-(1-&gt;4)-beta-D-Xyl}-L-seryl-[protein] + UDP + H(+). Has both beta-1,3-glucuronic acid and beta-1,4-N-acetylgalactosamine transferase activity. Transfers glucuronic acid (GlcUA) from UDP-GlcUA and N-acetylgalactosamine (GalNAc) from UDP-GalNAc to the non-reducing end of the elongating chondroitin polymer. Specific activity is much reduced compared to CHSY1. In Mus musculus (Mouse), this protein is Chondroitin sulfate synthase 3 (Chsy3).